The primary structure comprises 64 residues: MPKMKSHTGMGKRVRVTGKGKIVKQQAGLRHNLEKKSSTRTRRLTGLVEVAKPDVKRIKKLLGR.

Over residues 1–22 (MPKMKSHTGMGKRVRVTGKGKI) the composition is skewed to basic residues. The segment at 1 to 28 (MPKMKSHTGMGKRVRVTGKGKIVKQQAG) is disordered.

The protein belongs to the bacterial ribosomal protein bL35 family.

The sequence is that of Large ribosomal subunit protein bL35 from Salinispora tropica (strain ATCC BAA-916 / DSM 44818 / JCM 13857 / NBRC 105044 / CNB-440).